The chain runs to 1077 residues: Carbamoyl phosphate synthase large chain (1077 aa).

The carboxyphosphate synthetic domain stretch occupies residues 2-403; that stretch reads PKRTDIKSIL…SLQKALRGLE (402 aa). Arg129, Arg169, Gly175, Gly176, Glu208, Leu210, Glu215, Gly241, Ile242, His243, Gln285, and Glu299 together coordinate ATP. One can recognise an ATP-grasp 1 domain in the interval 133–328; that stretch reads DIAMKKIGLD…IAKIAAKLAV (196 aa). Residues Gln285, Glu299, and Asn301 each contribute to the Mg(2+) site. Residues Gln285, Glu299, and Asn301 each contribute to the Mn(2+) site. The interval 404-553 is oligomerization domain; sequence VGATGFDPKV…YSTYEEECES (150 aa). A carbamoyl phosphate synthetic domain region spans residues 554-936; that stretch reads NPTSDRPKVM…AFSKAMLGSQ (383 aa). The ATP-grasp 2 domain occupies 679–870; it reads QQAVNRLGLK…LAKIAARVMV (192 aa). Residues Arg715, Arg754, Leu756, Glu761, Gly786, Val787, His788, Ser789, Gln829, and Glu841 each contribute to the ATP site. Residues Gln829, Glu841, and Asn843 each contribute to the Mg(2+) site. Mn(2+) contacts are provided by Gln829, Glu841, and Asn843. In terms of domain architecture, MGS-like spans 937-1077; it reads SGMKKSGRAL…MHAKIKNMKA (141 aa). The allosteric domain stretch occupies residues 937–1077; that stretch reads SGMKKSGRAL…MHAKIKNMKA (141 aa).

The protein belongs to the CarB family. In terms of assembly, composed of two chains; the small (or glutamine) chain promotes the hydrolysis of glutamine to ammonia, which is used by the large (or ammonia) chain to synthesize carbamoyl phosphate. Tetramer of heterodimers (alpha,beta)4. Requires Mg(2+) as cofactor. Mn(2+) serves as cofactor.

It carries out the reaction hydrogencarbonate + L-glutamine + 2 ATP + H2O = carbamoyl phosphate + L-glutamate + 2 ADP + phosphate + 2 H(+). It catalyses the reaction hydrogencarbonate + NH4(+) + 2 ATP = carbamoyl phosphate + 2 ADP + phosphate + 2 H(+). Its pathway is amino-acid biosynthesis; L-arginine biosynthesis; carbamoyl phosphate from bicarbonate: step 1/1. It participates in pyrimidine metabolism; UMP biosynthesis via de novo pathway; (S)-dihydroorotate from bicarbonate: step 1/3. Functionally, large subunit of the glutamine-dependent carbamoyl phosphate synthetase (CPSase). CPSase catalyzes the formation of carbamoyl phosphate from the ammonia moiety of glutamine, carbonate, and phosphate donated by ATP, constituting the first step of 2 biosynthetic pathways, one leading to arginine and/or urea and the other to pyrimidine nucleotides. The large subunit (synthetase) binds the substrates ammonia (free or transferred from glutamine from the small subunit), hydrogencarbonate and ATP and carries out an ATP-coupled ligase reaction, activating hydrogencarbonate by forming carboxy phosphate which reacts with ammonia to form carbamoyl phosphate. The protein is Carbamoyl phosphate synthase large chain of Yersinia pestis.